We begin with the raw amino-acid sequence, 367 residues long: Protein RecA (367 aa).

Residue 73–80 (GPESSGKT) coordinates ATP. Positions 345–367 (DEPVAKKASAKESKEAKELKEVE) are disordered.

Belongs to the RecA family.

Its subcellular location is the cytoplasm. In terms of biological role, can catalyze the hydrolysis of ATP in the presence of single-stranded DNA, the ATP-dependent uptake of single-stranded DNA by duplex DNA, and the ATP-dependent hybridization of homologous single-stranded DNAs. It interacts with LexA causing its activation and leading to its autocatalytic cleavage. This chain is Protein RecA, found in Janthinobacterium sp. (strain Marseille) (Minibacterium massiliensis).